We begin with the raw amino-acid sequence, 352 residues long: Decapping nuclease din1 (352 aa).

Substrate is bound by residues Arg33 and 93–95 (WRG). Residue Glu150 coordinates a divalent metal cation. Residues Cys182 and Glu199 each coordinate substrate. A divalent metal cation is bound at residue Asp201. Ser218 carries the phosphoserine modification. 2 residues coordinate a divalent metal cation: Glu239 and Leu240. Substrate-binding residues include Lys241 and Gln263.

It belongs to the DXO/Dom3Z family. Interacts with dhp1/Rat1; the interaction is direct, stabilizes dhp1 protein structure and stimulates its exoribonuclease activity. The interaction also stimulates din1 pyrophosphohydrolase activity, probably by recruiting it to mRNA substrates. A divalent metal cation serves as cofactor.

The protein resides in the nucleus. The enzyme catalyses a 5'-end NAD(+)-phospho-ribonucleoside in mRNA + H2O = a 5'-end phospho-ribonucleoside in mRNA + NAD(+) + H(+). It catalyses the reaction a 5'-end (N(7)-methyl 5'-triphosphoguanosine)-ribonucleoside-ribonucleotide in mRNA + H2O = a (N(7)-methyl 5'-triphosphoguanosine)-nucleoside + a 5'-end phospho-ribonucleoside in mRNA + H(+). It carries out the reaction a 5'-end triphospho-ribonucleoside in mRNA + H2O = a 5'-end phospho-ribonucleoside in mRNA + diphosphate + H(+). Decapping enzyme for NAD-capped RNAs: specifically hydrolyzes the nicotinamide adenine dinucleotide (NAD) cap from a subset of RNAs by removing the entire NAD moiety from the 5'-end of an NAD-capped RNA. The NAD-cap is present at the 5'-end of some RNAs and snoRNAs. In contrast to the canonical 5'-end N7 methylguanosine (m7G) cap, the NAD cap promotes mRNA decay. Also acts as a non-canonical decapping enzyme that removes the entire cap structure of m7G capped or incompletely capped RNAs and mediates their subsequent degradation. Specifically degrades pre-mRNAs with a defective m7G cap and is part of a pre-mRNA capping quality control. Has decapping activity toward incomplete 5'-end m7G cap mRNAs such as unmethylated 5'-end-capped RNA (cap0), while it has no activity toward 2'-O-ribose methylated m7G cap (cap1). Also possesses RNA 5'-pyrophosphohydrolase activity by hydrolyzing the 5'-end triphosphate to release pyrophosphates. Stimulates exoribonuclease activity of dhp1, allowing it to degrade RNAs with stable secondary structure more effectively. The protein is Decapping nuclease din1 of Schizosaccharomyces pombe (strain 972 / ATCC 24843) (Fission yeast).